Consider the following 256-residue polypeptide: Tryptophan synthase alpha chain (256 aa).

Residues glutamate 46 and aspartate 57 each act as proton acceptor in the active site.

The protein belongs to the TrpA family. In terms of assembly, tetramer of two alpha and two beta chains.

It carries out the reaction (1S,2R)-1-C-(indol-3-yl)glycerol 3-phosphate + L-serine = D-glyceraldehyde 3-phosphate + L-tryptophan + H2O. The protein operates within amino-acid biosynthesis; L-tryptophan biosynthesis; L-tryptophan from chorismate: step 5/5. In terms of biological role, the alpha subunit is responsible for the aldol cleavage of indoleglycerol phosphate to indole and glyceraldehyde 3-phosphate. This Bacteroides thetaiotaomicron (strain ATCC 29148 / DSM 2079 / JCM 5827 / CCUG 10774 / NCTC 10582 / VPI-5482 / E50) protein is Tryptophan synthase alpha chain.